A 144-amino-acid polypeptide reads, in one-letter code: Protein D (144 aa).

The polypeptide is Protein D (D) (Escherichia coli).